The sequence spans 508 residues: Photosystem II CP47 reaction center protein (508 aa).

Helical transmembrane passes span 21–36 (SVHI…WAGS), 101–115 (IMLS…IWHW), 140–156 (GIHL…FGAF), 203–218 (IAAG…FHLS), 237–252 (VLSS…AFVV), and 457–472 (SFAL…HGAR).

The protein belongs to the PsbB/PsbC family. PsbB subfamily. PSII is composed of 1 copy each of membrane proteins PsbA, PsbB, PsbC, PsbD, PsbE, PsbF, PsbH, PsbI, PsbJ, PsbK, PsbL, PsbM, PsbT, PsbX, PsbY, PsbZ, Psb30/Ycf12, at least 3 peripheral proteins of the oxygen-evolving complex and a large number of cofactors. It forms dimeric complexes. Binds multiple chlorophylls. PSII binds additional chlorophylls, carotenoids and specific lipids. is required as a cofactor.

Its subcellular location is the plastid. It localises to the chloroplast thylakoid membrane. Its function is as follows. One of the components of the core complex of photosystem II (PSII). It binds chlorophyll and helps catalyze the primary light-induced photochemical processes of PSII. PSII is a light-driven water:plastoquinone oxidoreductase, using light energy to abstract electrons from H(2)O, generating O(2) and a proton gradient subsequently used for ATP formation. This is Photosystem II CP47 reaction center protein from Piper cenocladum (Ant piper).